The sequence spans 70 residues: ATP synthase subunit c (70 aa).

The next 2 helical transmembrane spans lie at 3 to 23 (FIAA…GNGM) and 47 to 67 (FIGV…AFML).

This sequence belongs to the ATPase C chain family. In terms of assembly, F-type ATPases have 2 components, F(1) - the catalytic core - and F(0) - the membrane proton channel. F(1) has five subunits: alpha(3), beta(3), gamma(1), delta(1), epsilon(1). F(0) has three main subunits: a(1), b(2) and c(10-14). The alpha and beta chains form an alternating ring which encloses part of the gamma chain. F(1) is attached to F(0) by a central stalk formed by the gamma and epsilon chains, while a peripheral stalk is formed by the delta and b chains.

The protein localises to the cell membrane. Its function is as follows. F(1)F(0) ATP synthase produces ATP from ADP in the presence of a proton or sodium gradient. F-type ATPases consist of two structural domains, F(1) containing the extramembraneous catalytic core and F(0) containing the membrane proton channel, linked together by a central stalk and a peripheral stalk. During catalysis, ATP synthesis in the catalytic domain of F(1) is coupled via a rotary mechanism of the central stalk subunits to proton translocation. Key component of the F(0) channel; it plays a direct role in translocation across the membrane. A homomeric c-ring of between 10-14 subunits forms the central stalk rotor element with the F(1) delta and epsilon subunits. The protein is ATP synthase subunit c of Lacticaseibacillus casei (strain BL23) (Lactobacillus casei).